We begin with the raw amino-acid sequence, 341 residues long: Probable long-chain-alcohol O-fatty-acyltransferase 9 (341 aa).

7 helical membrane passes run 9 to 29, 36 to 56, 82 to 102, 122 to 142, 146 to 166, 231 to 251, and 295 to 315; these read IIVWISAIISVSYCYYISANI, LFSVLPICGLFFVLPLFFSSV, GPLFPVAPNLIQFVCFTCFPI, FAIKIMIFGVVLHVYNYSHFL, VLLSLCFLHLYVELEILLGPL, MGYLVTFLVSGLFHELVYFYI, and RLLTMGFVVVTGGLLFFPLFI.

Belongs to the wax synthase family.

It localises to the membrane. It catalyses the reaction a long chain fatty alcohol + a fatty acyl-CoA = a wax ester + CoA. In terms of biological role, catalyzes the final step in the synthesis of long-chain linear esters (waxes). The polypeptide is Probable long-chain-alcohol O-fatty-acyltransferase 9 (Arabidopsis thaliana (Mouse-ear cress)).